A 703-amino-acid chain; its full sequence is Protein CNGC15c (703 aa).

Residues 1–10 (MGFDNPRSER) are compositionally biased toward basic and acidic residues. The tract at residues 1–23 (MGFDNPRSERFEDDPEISKIPTT) is disordered. The next 5 membrane-spanning stretches (helical) occupy residues 91–111 (IFLV…YLPV), 179–199 (GFWL…WIII), 216–236 (FFII…SSQI), 255–275 (LMLY…LSIE), and 372–392 (FIGE…LFAL). Position 480–565 (480–565 (LFDQMDERML…WALDPRPSVI (86 aa))) interacts with a nucleoside 3',5'-cyclic phosphate. Residues 616–644 (RTWAACFIQAAWRRHKKRKEAAELRAKEN) form the IQ domain. The disordered stretch occupies residues 676 to 703 (KGVNMHSGTNSGVVSSLQKPTEPDFSDE). The segment covering 681 to 694 (HSGTNSGVVSSLQK) has biased composition (polar residues).

This sequence belongs to the cyclic nucleotide-gated cation channel (TC 1.A.1.5) family. In terms of assembly, interacts (via N-terminus) with DMI1 (via c-terminus). The Nod factor has no effect on this interaction, implying that the complex is maintained after activation. As to expression, expressed in roots, stems, leaves, flowers and pods.

It is found in the nucleus membrane. In terms of biological role, cyclic nucleotide-gated channel involved in the establishment of both rhizobial and mycorrhizal associations. Required for full activation of nuclear-localized Ca(2+) oscillations by Nod and Myc factors. Simultaneous activation of the K(+)-permeable channel DMI1 and the Ca(2+) channel CNGC15 can give rise to sustained Ca(2+) oscillations. May function during fertilization in both female and male gametophytic Ca(2+) signaling. This chain is Protein CNGC15c, found in Medicago truncatula (Barrel medic).